Consider the following 87-residue polypeptide: Small ribosomal subunit protein uS17 (87 aa).

This sequence belongs to the universal ribosomal protein uS17 family. As to quaternary structure, part of the 30S ribosomal subunit.

Its function is as follows. One of the primary rRNA binding proteins, it binds specifically to the 5'-end of 16S ribosomal RNA. This chain is Small ribosomal subunit protein uS17, found in Bacillus cytotoxicus (strain DSM 22905 / CIP 110041 / 391-98 / NVH 391-98).